Reading from the N-terminus, the 215-residue chain is 3,4-dihydroxy-2-butanone 4-phosphate synthase (215 aa).

D-ribulose 5-phosphate contacts are provided by residues 38-39 (RE), aspartate 43, 151-155 (RRGHT), and glutamate 175. Glutamate 39 contributes to the Mg(2+) binding site. Histidine 154 is a Mg(2+) binding site.

Belongs to the DHBP synthase family. Homodimer. Mg(2+) serves as cofactor. The cofactor is Mn(2+).

The catalysed reaction is D-ribulose 5-phosphate = (2S)-2-hydroxy-3-oxobutyl phosphate + formate + H(+). It functions in the pathway cofactor biosynthesis; riboflavin biosynthesis; 2-hydroxy-3-oxobutyl phosphate from D-ribulose 5-phosphate: step 1/1. Catalyzes the conversion of D-ribulose 5-phosphate to formate and 3,4-dihydroxy-2-butanone 4-phosphate. This Haemophilus influenzae (strain 86-028NP) protein is 3,4-dihydroxy-2-butanone 4-phosphate synthase.